Here is a 189-residue protein sequence, read N- to C-terminus: EIHFTRTMHGIMRNITHFCSRTKSRTWGKDGWQKIVVCIIADGRQKVHPRTLNALAAMGVYQDGIAKNIVNQKPVNAHVYEYTTQVSLDPDLKFKGAEKGYKPCQIIFCLKERNEKKLNSHRWFFNAFGRALTPNVCILLDVGTKPAPTALYHLWKAFDQDSNVAGAAGEIKAGKGKGWLGLFNPLVAS.

This sequence belongs to the chitin synthase family. Class II subfamily.

The protein resides in the cell membrane. The enzyme catalyses [(1-&gt;4)-N-acetyl-beta-D-glucosaminyl](n) + UDP-N-acetyl-alpha-D-glucosamine = [(1-&gt;4)-N-acetyl-beta-D-glucosaminyl](n+1) + UDP + H(+). Its function is as follows. Polymerizes chitin, a structural polymer of the cell wall and septum, by transferring the sugar moiety of UDP-GlcNAc to the non-reducing end of the growing chitin polymer. This chain is Chitin synthase 2 (CHS2), found in Ajellomyces dermatitidis (Blastomyces dermatitidis).